A 317-amino-acid polypeptide reads, in one-letter code: Ribonuclease Z (317 aa).

Zn(2+) contacts are provided by His-63, His-65, Asp-67, His-68, His-143, Asp-214, and His-272. The active-site Proton acceptor is the Asp-67.

Belongs to the RNase Z family. In terms of assembly, homodimer. The cofactor is Zn(2+).

It carries out the reaction Endonucleolytic cleavage of RNA, removing extra 3' nucleotides from tRNA precursor, generating 3' termini of tRNAs. A 3'-hydroxy group is left at the tRNA terminus and a 5'-phosphoryl group is left at the trailer molecule.. Zinc phosphodiesterase, which displays some tRNA 3'-processing endonuclease activity. Probably involved in tRNA maturation, by removing a 3'-trailer from precursor tRNA. The polypeptide is Ribonuclease Z (Ligilactobacillus salivarius (strain UCC118) (Lactobacillus salivarius)).